Consider the following 620-residue polypeptide: Chaperone protein HscA homolog (620 aa).

It belongs to the heat shock protein 70 family.

In terms of biological role, chaperone involved in the maturation of iron-sulfur cluster-containing proteins. Has a low intrinsic ATPase activity which is markedly stimulated by HscB. In Shewanella loihica (strain ATCC BAA-1088 / PV-4), this protein is Chaperone protein HscA homolog.